A 157-amino-acid polypeptide reads, in one-letter code: Small ribosomal subunit protein uS7 (157 aa).

The protein belongs to the universal ribosomal protein uS7 family. As to quaternary structure, part of the 30S ribosomal subunit. Contacts proteins S9 and S11.

In terms of biological role, one of the primary rRNA binding proteins, it binds directly to 16S rRNA where it nucleates assembly of the head domain of the 30S subunit. Is located at the subunit interface close to the decoding center, probably blocks exit of the E-site tRNA. The sequence is that of Small ribosomal subunit protein uS7 from Leptospira borgpetersenii serovar Hardjo-bovis (strain JB197).